Here is a 314-residue protein sequence, read N- to C-terminus: Serine hydrolase-like protein 2 (314 aa).

Positions 33-293 (PPVLCLHGWL…GNHCVHMSEP (261 aa)) constitute an AB hydrolase-1 domain. Ser-108 is a catalytic residue.

It belongs to the AB hydrolase superfamily.

It is found in the cytoplasm. The protein localises to the perinuclear region. Its subcellular location is the peroxisome. In terms of biological role, probable serine hydrolase. May be related to cell muscle hypertrophy. The chain is Serine hydrolase-like protein 2 (SERHL2) from Homo sapiens (Human).